The primary structure comprises 335 residues: Ferrochelatase (335 aa).

His207 and Glu288 together coordinate Fe cation.

The protein belongs to the ferrochelatase family.

The protein localises to the cytoplasm. It catalyses the reaction heme b + 2 H(+) = protoporphyrin IX + Fe(2+). The protein operates within porphyrin-containing compound metabolism; protoheme biosynthesis; protoheme from protoporphyrin-IX: step 1/1. Its function is as follows. Catalyzes the ferrous insertion into protoporphyrin IX. This chain is Ferrochelatase, found in Helicobacter pylori (strain G27).